We begin with the raw amino-acid sequence, 225 residues long: Guanylate kinase (225 aa).

The 179-residue stretch at 20–198 (GNLFMVVAPS…ALSELQCLVA (179 aa)) folds into the Guanylate kinase-like domain. 27–34 (APSGAGKS) contacts ATP.

It belongs to the guanylate kinase family.

Its subcellular location is the cytoplasm. It catalyses the reaction GMP + ATP = GDP + ADP. In terms of biological role, essential for recycling GMP and indirectly, cGMP. This is Guanylate kinase from Paraburkholderia xenovorans (strain LB400).